The following is a 141-amino-acid chain: Large ribosomal subunit protein uL11c (141 aa).

Belongs to the universal ribosomal protein uL11 family. Part of the ribosomal stalk of the 50S ribosomal subunit. Interacts with L10 and the large rRNA to form the base of the stalk. L10 forms an elongated spine to which L12 dimers bind in a sequential fashion forming a multimeric L10(L12)X complex.

The protein resides in the plastid. The protein localises to the chloroplast. Functionally, forms part of the ribosomal stalk which helps the ribosome interact with GTP-bound translation factors. This is Large ribosomal subunit protein uL11c from Pyropia yezoensis (Susabi-nori).